The following is a 354-amino-acid chain: Uroporphyrinogen decarboxylase (354 aa).

Substrate contacts are provided by residues 27–31, Asp77, Tyr154, Thr209, and His327; that span reads RQAGR.

Belongs to the uroporphyrinogen decarboxylase family. In terms of assembly, homodimer.

It is found in the cytoplasm. The enzyme catalyses uroporphyrinogen III + 4 H(+) = coproporphyrinogen III + 4 CO2. The protein operates within porphyrin-containing compound metabolism; protoporphyrin-IX biosynthesis; coproporphyrinogen-III from 5-aminolevulinate: step 4/4. Its function is as follows. Catalyzes the decarboxylation of four acetate groups of uroporphyrinogen-III to yield coproporphyrinogen-III. This Salmonella dublin (strain CT_02021853) protein is Uroporphyrinogen decarboxylase.